A 359-amino-acid chain; its full sequence is Lipopolysaccharide 1,6-galactosyltransferase (359 aa).

Residues Gln242 and Glu274 each contribute to the UDP site.

The protein belongs to the glycosyltransferase group 1 family. Glycosyltransferase 4 subfamily.

The enzyme catalyses alpha-D-Glc-(1-&gt;3)-[L-alpha-D-Hep-(1-&gt;7)]-4-O-PO3(2-)-L-alpha-D-Hep-(1-&gt;3)-4-O-PO3(2-)-L-alpha-D-Hep-(1-&gt;5)-[alpha-Kdo-(2-&gt;4)]-alpha-Kdo-(2-&gt;6)-lipid A + UDP-alpha-D-galactose = alpha-D-Gal-(1-&gt;6)-alpha-D-Glc-(1-&gt;3)-[L-alpha-D-Hep-(1-&gt;7)]-4-O-PO3(2-)-L-alpha-D-Hep-(1-&gt;3)-4-O-PO3(2-)-L-alpha-D-Hep-(1-&gt;5)-[alpha-Kdo-(2-&gt;4)]-alpha-Kdo-(2-&gt;6)-lipid A + UDP + H(+). It participates in bacterial outer membrane biogenesis; LPS core biosynthesis. Galactosyltransferase involved in the biosynthesis of the core oligosaccharide region of lipopolysaccharide (LPS). Catalyzes the addition of galactose from UDP-galactose to the first glucose residue of the LPS outer core. Cannot use other sugar donors, such as UDP-glucose, UDP-glucuronic acid, UDP-galacuronic acid, GDP-mannose, ADP-glucose and GDP-glucose. In the absence of a lipid acceptor, can hydrolyze UDP-galactose to UDP and galactose. In Escherichia coli (strain K12), this protein is Lipopolysaccharide 1,6-galactosyltransferase.